The chain runs to 313 residues: MIFSTLEHILTHISFSIVSIVITIHLITLLVDEIVKLYDSSEKGIIVTFFCITGLLVTRWISSGHFPLSDLYESLIFLSWSFSLIHIIPYFKKNVLILSKIIGPSAIFTQGFATSGILTEIHQSVILVPALQSEWLIMHVSMMILGYAALLCGSLLSVALLVITFRKNRQLFYKSNGFLNESFFLGENVLQNTYFFSAKNYYRSQLIQQLDYWSYRVISLGFTFLTIGILSGAVWANEAWGSYWNWDPKETWAFITWIVFAIYLHTRTNRNLRGANSAIVASIGFLIIWICYFGVNLLGIGLHSYGSFPSTFN.

8 helical membrane passes run 9–29, 44–64, 71–91, 101–121, 143–163, 217–237, 244–264, and 278–298; these read ILTH…LITL, GIIV…ISSG, LYES…IPYF, IIGP…LTEI, MILG…LLVI, VISL…VWAN, WNWD…AIYL, and AIVA…VNLL.

This sequence belongs to the CcmF/CycK/Ccl1/NrfE/CcsA family. May interact with Ccs1.

Its subcellular location is the plastid. It localises to the chloroplast thylakoid membrane. Functionally, required during biogenesis of c-type cytochromes (cytochrome c6 and cytochrome f) at the step of heme attachment. This is Cytochrome c biogenesis protein CcsA from Nicotiana tomentosiformis (Tobacco).